A 174-amino-acid chain; its full sequence is Secretory-abundant heat soluble protein 2 (174 aa).

The first 19 residues, 1-19 (MHRFVLALVVFAGAAIVWA), serve as a signal peptide directing secretion. Residues 30–60 (EWTGKPWMGKWESDPSKDENVEEFKKKLQLP) form an SAHS-c1 region. An SAHS-c2 region spans residues 77 to 105 (YKKGDEYHHKIIINDAHYKNDIVFKLGQE). Residue Asn111 is glycosylated (N-linked (GlcNAc...) asparagine). The interval 118 to 172 (KYEDKDGALVGSVHYTGTKEQSLDKTINNVFKLEGDHLVKTSTIEGVTMKRHYNK) is SAHS-c3.

The protein belongs to the Secretory-abundant heat soluble protein (SAHS) family.

The protein resides in the secreted. Its function is as follows. Secreted heat soluble protein acting as a molecular shield in water-deficient condition. Tardigrade-specific intrinsically disordered proteins (TDPs) are essential for desiccation tolerance by forming non-crystalline amorphous solids upon desiccation, and this vitrified state mirrors their protective capabilities. In Ramazzottius varieornatus (Water bear), this protein is Secretory-abundant heat soluble protein 2.